Reading from the N-terminus, the 191-residue chain is MDVGSKEVLMESPPDYSAAPRGRFGIPCCPVHLKRLLIVVVVVVLVVVVIVGALLMGLHMSQKHTEMVLEMSIGAPEAQQHLARSGHLVTTATFSFGSTGLVVYDYQRLLIAYKPAPGTWCYIMKTAPESIPSLEALTRKVQNFQAKPAVPTSKLDQVEGRDAGSAPSRGDLAFLGMAVSTLCGEVPLYYI.

A propeptide spanning residues 1–23 (MDVGSKEVLMESPPDYSAAPRGR) is cleaved from the precursor. S-palmitoyl cysteine attachment occurs at residues C28 and C29. Positions 59-191 (HMSQKHTEMV…LCGEVPLYYI (133 aa)) are excised as a propeptide. The 98-residue stretch at 94 to 191 (FSFGSTGLVV…LCGEVPLYYI (98 aa)) folds into the BRICHOS domain. C121 and C183 are disulfide-bonded.

The protein localises to the secreted. It localises to the extracellular space. Its subcellular location is the surface film. Its function is as follows. Pulmonary surfactant associated proteins promote alveolar stability by lowering the surface tension at the air-liquid interface in the peripheral air spaces. This Macaca mulatta (Rhesus macaque) protein is Surfactant protein C (SFTPC).